Consider the following 593-residue polypeptide: MDRFSRKCLLFLLLIILLDSPLTCHSWGWFSSSSSSAEDPYSSSFSRSRKSNPDFSMEVFSDQKAVQVLENKLVGLTSCWQNAYSYLLAGCKETIATEEKRKRFAWYLSDCFIKDSGRPAFPTCKDESVMMSCLKKLDDHEHKIYLDFLLETNTICQQLQSNAFKNEIERLVNELKNTAQYTEDKLDILESKSDALIQTSSMIHDSLGSLDVRVQNVASVTNTLETSVSGLSQQTVEISQEQKNIAESQLALRDGQVKMKETLKDGMDMFLDAYTNIQEGVDKLKSDTEQIEVEISVLGNNLSTKMIDLQSTTDDIGTKTRSSLDKQQKLLDGQTVALDGIQFLTRFQSEALQESRNTLQRLKEFSQEQQEDLAKRQEKLQEVHDHLFENSKSMLEAQVAFEAKQANMFVALDKLFALHNAMLLESRVIKAFVIYFLSIFVIYMFTSTKQTYIIRPRLYIGLCVTLALEVASLRYVNDTERQAWMINLIRSLFALLASAQLLHAALSYRDYEVLNHQILLRLVDKVNDMQSKKELSYDEDTESEVDWTSWVDTDLTDDDDNLADPDYKIPLLIKDNPVTTSSLTRRLYNFRPR.

Residues 1–24 form the signal peptide; the sequence is MDRFSRKCLLFLLLIILLDSPLTC. The Extracellular portion of the chain corresponds to 25–427; the sequence is HSWGWFSSSS…LHNAMLLESR (403 aa). 2 coiled-coil regions span residues 156 to 194 and 350 to 387; these read CQQLQSNAFKNEIERLVNELKNTAQYTEDKLDILESKSD and EALQESRNTLQRLKEFSQEQQEDLAKRQEKLQEVHDHL. A helical membrane pass occupies residues 428–448; sequence VIKAFVIYFLSIFVIYMFTST. Topologically, residues 449–457 are cytoplasmic; the sequence is KQTYIIRPR. The chain crosses the membrane as a helical span at residues 458–476; the sequence is LYIGLCVTLALEVASLRYV. The Extracellular portion of the chain corresponds to 477-485; sequence NDTERQAWM. The helical transmembrane segment at 486–506 threads the bilayer; it reads INLIRSLFALLASAQLLHAAL. Over 507 to 593 the chain is Cytoplasmic; that stretch reads SYRDYEVLNH…TRRLYNFRPR (87 aa).

Homodimer. As to expression, in tricellular pollen, expressed in mature sperm cells. Not expressed in bicellular or unicellular pollen. Detected in ovules, roots and guard cells. Expressed in the embryo sac before cellularization, in the egg cell after cellularization, in the zygote/embryo immediately after fertilization and in the pollen vegetative cell.

It is found in the cell membrane. Its function is as follows. Has a dual function during gametophyte development and early embryogenesis. Required for correct pollen maturation. The chain is Protein GAMETE EXPRESSED 1 (GEX1) from Arabidopsis thaliana (Mouse-ear cress).